Here is a 792-residue protein sequence, read N- to C-terminus: Pentatricopeptide repeat-containing protein At4g30700 (792 aa).

PPR repeat units lie at residues 51–81 (DISL…VQRP), 82–117 (DVFL…DLKP), 118–152 (NSST…GCDS), 153–183 (ELLL…MPEK), 184–218 (DTIL…SCTR), 220–254 (DTTT…GCYS), 255–285 (HDYV…FRKP), 286–320 (DIVA…GARL), 321–352 (RSST…NFLS), 353–383 (HASV…SPEK), 384–418 (SLPS…EFSP), 419–453 (NPVT…DFES), 454–484 (SIYV…MTKK), 485–519 (NEVT…GITP), 520–555 (TPVT…GFEP), and 556–586 (SVKH…MSIE). Positions 591–666 (VWETLLGACR…APGYTLIEIG (76 aa)) are type E motif. The interval 667-697 (ETPHVFTSGDQSHPQVKEIYEKLEKLEGKMR) is type E(+) motif. The interval 698-792 (EAGYQPETEL…DGVCSCGDYW (95 aa)) is type DYW motif.

It belongs to the PPR family. PCMP-H subfamily.

This chain is Pentatricopeptide repeat-containing protein At4g30700 (DYW9), found in Arabidopsis thaliana (Mouse-ear cress).